The following is a 139-amino-acid chain: Nucleoside diphosphate kinase (139 aa).

Residues Lys10, Phe58, Arg86, Thr92, Arg103, and Asn113 each coordinate ATP. Catalysis depends on His116, which acts as the Pros-phosphohistidine intermediate.

This sequence belongs to the NDK family. As to quaternary structure, homotetramer. The cofactor is Mg(2+).

It localises to the cytoplasm. It catalyses the reaction a 2'-deoxyribonucleoside 5'-diphosphate + ATP = a 2'-deoxyribonucleoside 5'-triphosphate + ADP. The catalysed reaction is a ribonucleoside 5'-diphosphate + ATP = a ribonucleoside 5'-triphosphate + ADP. In terms of biological role, major role in the synthesis of nucleoside triphosphates other than ATP. The ATP gamma phosphate is transferred to the NDP beta phosphate via a ping-pong mechanism, using a phosphorylated active-site intermediate. The sequence is that of Nucleoside diphosphate kinase from Oleidesulfovibrio alaskensis (strain ATCC BAA-1058 / DSM 17464 / G20) (Desulfovibrio alaskensis).